The sequence spans 368 residues: L-lactate oxidase (368 aa).

Residues 13–368 (VNAIDVLDLA…KQMKVKTTFA (356 aa)) enclose the FMN hydroxy acid dehydrogenase domain. Y39 lines the pyruvate pocket. Residues 92–94 (PIA), S121, and Q143 each bind FMN. Pyruvate is bound at residue Y145. T171 is a binding site for FMN. R180 is a pyruvate binding site. FMN contacts are provided by K239 and S261. H263 and R266 together coordinate pyruvate. The Proton acceptor role is filled by H263. Residues 294-298 (DGGVQ) and R318 contribute to the FMN site.

It belongs to the FMN-dependent alpha-hydroxy acid dehydrogenase family. In terms of assembly, homotetramer. Requires FMN as cofactor.

The catalysed reaction is (S)-lactate + O2 = pyruvate + H2O2. The enzyme catalyses 2-hydroxyoctanoate + O2 = 2-oxooctanoate + H2O2. In terms of biological role, catalyzes the oxidation of (S)-lactate (L-lactate) to pyruvate, with a reduction of O2 to H2O2. To a lesser extent is also able to use 2-hydroxyoctanoate as substrate. May be involved in the utilization of L-lactate as an energy source for growth. This is L-lactate oxidase from Lacticaseibacillus rhamnosus (strain LMS2-1).